The following is a 265-amino-acid chain: 3-methyl-2-oxobutanoate hydroxymethyltransferase (265 aa).

The Mg(2+) site is built by Asp-46 and Asp-85. 3-methyl-2-oxobutanoate-binding positions include 46-47, Asp-85, and Lys-114; that span reads DS. Residue Glu-116 coordinates Mg(2+). Glu-183 functions as the Proton acceptor in the catalytic mechanism.

The protein belongs to the PanB family. In terms of assembly, homodecamer; pentamer of dimers. Mg(2+) is required as a cofactor.

The protein localises to the cytoplasm. It carries out the reaction 3-methyl-2-oxobutanoate + (6R)-5,10-methylene-5,6,7,8-tetrahydrofolate + H2O = 2-dehydropantoate + (6S)-5,6,7,8-tetrahydrofolate. Its pathway is cofactor biosynthesis; coenzyme A biosynthesis. Its function is as follows. Catalyzes the reversible reaction in which hydroxymethyl group from 5,10-methylenetetrahydrofolate is transferred onto alpha-ketoisovalerate to form ketopantoate. This Pyrobaculum calidifontis (strain DSM 21063 / JCM 11548 / VA1) protein is 3-methyl-2-oxobutanoate hydroxymethyltransferase.